Here is a 482-residue protein sequence, read N- to C-terminus: C3a anaphylatoxin chemotactic receptor (482 aa).

The Extracellular portion of the chain corresponds to 1-23; the sequence is MASFSAETNSTDLLSQPWNEPPV. N9 carries an N-linked (GlcNAc...) asparagine glycan. A helical transmembrane segment spans residues 24-46; that stretch reads ILSMVILSLTFLLGLPGNGLVLW. The Cytoplasmic segment spans residues 47-57; that stretch reads VAGLKMQRTVN. Residues 58–80 traverse the membrane as a helical segment; sequence TVWFLHLTLADLLCCLSLPFSLA. At 81-96 the chain is on the extracellular side; sequence HLALQGQWPYGRFLCE. Residues C95 and C172 are joined by a disulfide bond. A helical transmembrane segment spans residues 97–118; the sequence is LIPSIIVLNMFASVFLLTAISL. Residues 119–139 are Cytoplasmic-facing; that stretch reads DRCLVVFKPIWCQNHRNVGTA. A helical transmembrane segment spans residues 140–160; that stretch reads CSICGCIWVVAFVMCIPVFVY. The Extracellular portion of the chain corresponds to 161–340; that stretch reads REIFTADNHN…TPLVAITITR (180 aa). A sulfotyrosine mark is found at Y174 and Y184. N194 carries an N-linked (GlcNAc...) asparagine glycan. Y318 bears the Sulfotyrosine mark. Residues 341 to 360 traverse the membrane as a helical segment; that stretch reads LVVGFLLPSVIMIACYSFIV. Residues 361–377 lie on the Cytoplasmic side of the membrane; the sequence is FRMQRGRFAKSQSKTFR. Residues 378–400 traverse the membrane as a helical segment; it reads VAVVVVAVFLVCWTPYHIFGVLS. Residues 401-417 are Extracellular-facing; it reads LLIDPESPLGKTLMSWD. Residues 418-438 traverse the membrane as a helical segment; that stretch reads HVSIALASANSCFNPFLYALL. Topologically, residues 439 to 482 are cytoplasmic; sequence GKDFRKKARQSIQGILEAAFSEELTRSTHCNSNNVFSERNSTTV. S459 is subject to Phosphoserine. Residue T463 is modified to Phosphothreonine.

The protein belongs to the G-protein coupled receptor 1 family. Interacts with VGF-derived peptide TLQP-21. Post-translationally, among the sulfation sites Tyr-174 is essential for binding of C3a anaphylatoxin.

The protein localises to the cell membrane. In terms of biological role, receptor for the chemotactic and inflammatory peptide anaphylatoxin C3a. This receptor stimulates chemotaxis, granule enzyme release and superoxide anion production. This is C3a anaphylatoxin chemotactic receptor (C3AR1) from Pongo abelii (Sumatran orangutan).